The following is a 192-amino-acid chain: Probable molybdenum cofactor guanylyltransferase (192 aa).

Residues 8–10 (LAG), Lys20, Asp69, and Asp94 contribute to the GTP site. Position 94 (Asp94) interacts with Mg(2+).

This sequence belongs to the MobA family. Requires Mg(2+) as cofactor.

The protein localises to the cytoplasm. It catalyses the reaction Mo-molybdopterin + GTP + H(+) = Mo-molybdopterin guanine dinucleotide + diphosphate. In terms of biological role, transfers a GMP moiety from GTP to Mo-molybdopterin (Mo-MPT) cofactor (Moco or molybdenum cofactor) to form Mo-molybdopterin guanine dinucleotide (Mo-MGD) cofactor. The sequence is that of Probable molybdenum cofactor guanylyltransferase from Pyrococcus horikoshii (strain ATCC 700860 / DSM 12428 / JCM 9974 / NBRC 100139 / OT-3).